The sequence spans 213 residues: Cytochrome b-c1 complex subunit Rieske, mitochondrial (213 aa).

Residues 1–29 (MSSLAFRTLRNGLGLKSSVRALSTTTTTL) constitute a mitochondrion transit peptide. Over 30–47 (SNYQQPDYSSYLNNKSGQ) the chain is Mitochondrial matrix. The chain crosses the membrane as a helical span at residues 48–77 (GSRNFTYFMVGSMGLLSAAGAKSTVEAFLS). The Mitochondrial intermembrane portion of the chain corresponds to 78–213 (SFAASADVLA…FTDDETLLVG (136 aa)). One can recognise a Rieske domain in the interval 116–211 (RHRTADEIEE…YDFTDDETLL (96 aa)). Residues Cys156, His158, Cys175, and His178 each contribute to the [2Fe-2S] cluster site. Cys161 and Cys177 are disulfide-bonded.

It belongs to the Rieske iron-sulfur protein family. In terms of assembly, component of the ubiquinol-cytochrome c oxidoreductase (cytochrome b-c1 complex, complex III, CIII), a multisubunit enzyme composed of 10 subunits. The complex is composed of 3 respiratory subunits cytochrome b (COB), cytochrome c1 (CYT1) and Rieske protein (RIP1), 2 core protein subunits COR1 and QCR2, and 5 low-molecular weight protein subunits QCR6, QCR7, QCR8, QCR9 and QCR10. The complex exists as an obligatory dimer and forms supercomplexes (SCs) in the inner mitochondrial membrane with a monomer or a dimer of cytochrome c oxidase (complex IV, CIV), resulting in 2 different assemblies (supercomplexes III(2)IV and III(2)IV(2)). Requires [2Fe-2S] cluster as cofactor.

It is found in the mitochondrion inner membrane. It catalyses the reaction a quinol + 2 Fe(III)-[cytochrome c](out) = a quinone + 2 Fe(II)-[cytochrome c](out) + 2 H(+)(out). Its function is as follows. Component of the ubiquinol-cytochrome c oxidoreductase, a multisubunit transmembrane complex that is part of the mitochondrial electron transport chain which drives oxidative phosphorylation. The complex plays an important role in the uptake of multiple carbon sources present in different host niches. In Candida albicans (strain SC5314 / ATCC MYA-2876) (Yeast), this protein is Cytochrome b-c1 complex subunit Rieske, mitochondrial.